The primary structure comprises 257 residues: MPLFYETEVRSRLLLGTARYPSPAVLAEAVRRSGTDIVTVSLRRETAGGRQGGAFFELIRELGVRVLPNTAGCHSVSEAVLTARMAREVFGTDWIKLEVIGHQDTLQPDVFGLVEGARILTGEGFQVFPYTTDDLVVAERLLEAGCQVLMPWCAPIGSAMGPQNVQGLRAMRAEFPDVPLIVDAGIGRPSHATTVMELGYDAVLLNTAVAGAADPAAMAEAFTKAIDAGHAAHGAGMLEPRDMAVPSTPVIGKAVFS.

The active-site Schiff-base intermediate with DXP is the Lys-96. 1-deoxy-D-xylulose 5-phosphate-binding positions include Gly-157, 184–185 (AG), and 206–207 (NT).

Belongs to the ThiG family. Homotetramer. Forms heterodimers with either ThiH or ThiS.

The protein resides in the cytoplasm. The enzyme catalyses [ThiS sulfur-carrier protein]-C-terminal-Gly-aminoethanethioate + 2-iminoacetate + 1-deoxy-D-xylulose 5-phosphate = [ThiS sulfur-carrier protein]-C-terminal Gly-Gly + 2-[(2R,5Z)-2-carboxy-4-methylthiazol-5(2H)-ylidene]ethyl phosphate + 2 H2O + H(+). The protein operates within cofactor biosynthesis; thiamine diphosphate biosynthesis. Its function is as follows. Catalyzes the rearrangement of 1-deoxy-D-xylulose 5-phosphate (DXP) to produce the thiazole phosphate moiety of thiamine. Sulfur is provided by the thiocarboxylate moiety of the carrier protein ThiS. In vitro, sulfur can be provided by H(2)S. The sequence is that of Thiazole synthase from Rhizobium meliloti (strain 1021) (Ensifer meliloti).